A 105-amino-acid polypeptide reads, in one-letter code: Small ribosomal subunit protein bS18 (105 aa).

Residues 1 to 34 (MMINKEQDLNQLETNQEQSVEQNQTDEKRKPKPN) are disordered. Residues 9–23 (LNQLETNQEQSVEQN) are compositionally biased toward polar residues.

This sequence belongs to the bacterial ribosomal protein bS18 family. As to quaternary structure, part of the 30S ribosomal subunit. Forms a tight heterodimer with protein bS6.

Functionally, binds as a heterodimer with protein bS6 to the central domain of the 16S rRNA, where it helps stabilize the platform of the 30S subunit. This Mycoplasma genitalium (strain ATCC 33530 / DSM 19775 / NCTC 10195 / G37) (Mycoplasmoides genitalium) protein is Small ribosomal subunit protein bS18.